The primary structure comprises 435 residues: Methylenetetrahydrofolate--tRNA-(uracil-5-)-methyltransferase TrmFO (435 aa).

9–14 contributes to the FAD binding site; the sequence is GAGLAG.

Belongs to the MnmG family. TrmFO subfamily. FAD serves as cofactor.

It localises to the cytoplasm. The enzyme catalyses uridine(54) in tRNA + (6R)-5,10-methylene-5,6,7,8-tetrahydrofolate + NADH + H(+) = 5-methyluridine(54) in tRNA + (6S)-5,6,7,8-tetrahydrofolate + NAD(+). It catalyses the reaction uridine(54) in tRNA + (6R)-5,10-methylene-5,6,7,8-tetrahydrofolate + NADPH + H(+) = 5-methyluridine(54) in tRNA + (6S)-5,6,7,8-tetrahydrofolate + NADP(+). Catalyzes the folate-dependent formation of 5-methyl-uridine at position 54 (M-5-U54) in all tRNAs. In Staphylococcus aureus (strain MRSA252), this protein is Methylenetetrahydrofolate--tRNA-(uracil-5-)-methyltransferase TrmFO.